A 552-amino-acid chain; its full sequence is T-box transcription factor TBX4 (552 aa).

The span at 1–14 (MLQDKGLSESEEAF) shows a compositional bias: basic and acidic residues. Positions 1 to 50 (MLQDKGLSESEEAFRAPGPALGEASNTSTTNAPEPALATPGLSGAALSSP) are disordered. A DNA-binding region (T-box) is located at residues 76 to 256 (LHEKELWKKF…NNPFAKGFRG (181 aa)). The residue at position 514 (S514) is a Phosphoserine.

The protein localises to the nucleus. In terms of biological role, transcriptional regulator that has an essential role in the organogenesis of lungs, pelvis, and hindlimbs. This Mus musculus (Mouse) protein is T-box transcription factor TBX4 (Tbx4).